A 390-amino-acid polypeptide reads, in one-letter code: S-adenosylmethionine synthase 1 (390 aa).

E9 contacts Mg(2+). H15 serves as a coordination point for ATP. E43 lines the K(+) pocket. Residues E56 and Q99 each coordinate L-methionine. Residues 167 to 169 (DGK), 235 to 238 (SGRF), D246, 252 to 253 (RK), A269, K273, and K277 each bind ATP. D246 contacts L-methionine. K277 provides a ligand contact to L-methionine.

Belongs to the AdoMet synthase family. Homotetramer. Mn(2+) is required as a cofactor. The cofactor is Mg(2+). It depends on Co(2+) as a cofactor. K(+) serves as cofactor.

The protein localises to the cytoplasm. The catalysed reaction is L-methionine + ATP + H2O = S-adenosyl-L-methionine + phosphate + diphosphate. Its pathway is amino-acid biosynthesis; S-adenosyl-L-methionine biosynthesis; S-adenosyl-L-methionine from L-methionine: step 1/1. In terms of biological role, catalyzes the formation of S-adenosylmethionine from methionine and ATP. The reaction comprises two steps that are both catalyzed by the same enzyme: formation of S-adenosylmethionine (AdoMet) and triphosphate, and subsequent hydrolysis of the triphosphate. This Actinidia chinensis var. chinensis (Chinese soft-hair kiwi) protein is S-adenosylmethionine synthase 1 (SAM1).